The sequence spans 295 residues: MAQKEKDALSGVETTGHEWDGLRELNNPLPKWWLYIFYVCIAWSLVYYVLYPAWPLGKSYTKGLLGYSQREELVQKVADGKKAQEKYLTAIAATSVEDIQKNKDLLAFAMAGGRSYFNENCAACHGAGGQGAKGFPTLADDVWLWGGTTADIYKTIQHGIRADDGDTRGTVGIGMTAFGRDGILNRDQIGQVAEYILSLNKRSTDAAAAEKGKTVYDENCAACHGENAQGSLAVGMEVGAPPLVTGNWLYGGDKATLVQTITNGRAGVMPAWSKRLDDATIKSLAVYVHNLGGGK.

Residues 1–31 (MAQKEKDALSGVETTGHEWDGLRELNNPLPK) lie on the Cytoplasmic side of the membrane. Residues 32–52 (WWLYIFYVCIAWSLVYYVLYP) form a helical membrane-spanning segment. Over 53-295 (AWPLGKSYTK…VYVHNLGGGK (243 aa)) the chain is Periplasmic. 2 consecutive Cytochrome c domains span residues 108–200 (FAMA…LSLN) and 207–292 (AAAE…HNLG). Heme c-binding residues include C121, C124, H125, M175, C220, C223, H224, and M269.

Belongs to the CcoP / FixP family. In terms of assembly, component of the cbb3-type cytochrome c oxidase at least composed of CcoN, CcoO, CcoQ and CcoP. Heme c is required as a cofactor.

It localises to the cell inner membrane. It participates in energy metabolism; oxidative phosphorylation. Its function is as follows. C-type cytochrome. Part of the cbb3-type cytochrome c oxidase complex. CcoP subunit is required for transferring electrons from donor cytochrome c via its heme groups to CcoO subunit. From there, electrons are shuttled to the catalytic binuclear center of CcoN subunit where oxygen reduction takes place. The complex also functions as a proton pump. The chain is Cbb3-type cytochrome c oxidase subunit CcoP from Azospirillum brasilense.